Reading from the N-terminus, the 372-residue chain is tRNA-specific 2-thiouridylase MnmA (372 aa).

Residues 9-16 (GLSGGVDS) and M35 each bind ATP. The tract at residues 95–97 (NPD) is interaction with target base in tRNA. The active-site Nucleophile is C100. C100 and C198 form a disulfide bridge. ATP is bound at residue G124. The interval 148 to 150 (KDQ) is interaction with tRNA. The active-site Cysteine persulfide intermediate is C198. Positions 317–318 (RY) are interaction with tRNA.

It belongs to the MnmA/TRMU family.

It is found in the cytoplasm. It carries out the reaction S-sulfanyl-L-cysteinyl-[protein] + uridine(34) in tRNA + AH2 + ATP = 2-thiouridine(34) in tRNA + L-cysteinyl-[protein] + A + AMP + diphosphate + H(+). Functionally, catalyzes the 2-thiolation of uridine at the wobble position (U34) of tRNA, leading to the formation of s(2)U34. The chain is tRNA-specific 2-thiouridylase MnmA from Delftia acidovorans (strain DSM 14801 / SPH-1).